The sequence spans 136 residues: ATP synthase epsilon chain (136 aa).

Belongs to the ATPase epsilon chain family. F-type ATPases have 2 components, CF(1) - the catalytic core - and CF(0) - the membrane proton channel. CF(1) has five subunits: alpha(3), beta(3), gamma(1), delta(1), epsilon(1). CF(0) has three main subunits: a, b and c.

The protein localises to the cell inner membrane. In terms of biological role, produces ATP from ADP in the presence of a proton gradient across the membrane. The sequence is that of ATP synthase epsilon chain from Myxococcus xanthus (strain DK1622).